An 804-amino-acid chain; its full sequence is Protein translocase subunit SecA (804 aa).

ATP is bound by residues Gln87, 105–109, and Asp500; that span reads GEGKT.

This sequence belongs to the SecA family. As to quaternary structure, monomer and homodimer. Part of the essential Sec protein translocation apparatus which comprises SecA, SecYEG and auxiliary proteins SecDF-YajC and YidC.

Its subcellular location is the cell inner membrane. The protein resides in the cytoplasm. The catalysed reaction is ATP + H2O + cellular proteinSide 1 = ADP + phosphate + cellular proteinSide 2.. Its function is as follows. Part of the Sec protein translocase complex. Interacts with the SecYEG preprotein conducting channel. Has a central role in coupling the hydrolysis of ATP to the transfer of proteins into and across the cell membrane, serving both as a receptor for the preprotein-SecB complex and as an ATP-driven molecular motor driving the stepwise translocation of polypeptide chains across the membrane. The polypeptide is Protein translocase subunit SecA (Neorickettsia sennetsu (strain ATCC VR-367 / Miyayama) (Ehrlichia sennetsu)).